Consider the following 300-residue polypeptide: ETS homologous factor (300 aa).

Positions 29–115 (STCNVSSGFF…SNLQHLKWNG (87 aa)) constitute a PNT domain. Residues 183 to 202 (ESPDMKKEQDPPAKCHTKKH) are disordered. Positions 185-195 (PDMKKEQDPPA) are enriched in basic and acidic residues. The ETS DNA-binding region spans 207–289 (THLWEFIRDI…DGRRLVYKFG (83 aa)).

This sequence belongs to the ETS family. Expressed exclusively in tissues with a high content of epithelial cells. Highly expressed in salivary gland, mammary gland, prostate, and lung. Weakly expressed in kidney and colon. Not detected in heart, brain, placenta, liver, skeletal muscle, spleen, thymus, testis, ovary, small intestine or peripheral blood leukocytes.

The protein localises to the nucleus. Transcriptional activator that may play a role in regulating epithelial cell differentiation and proliferation. May act as a repressor for a specific subset of ETS/AP-1-responsive genes and as a modulator of the nuclear response to mitogen-activated protein kinase signaling cascades. Binds to DNA sequences containing the consensus nucleotide core sequence GGAA. Involved in regulation of TNFRSF10B/DR5 expression through Ets-binding sequences on the TNFRSF10B/DR5 promoter. May contribute to development and carcinogenesis by acting as a tumor suppressor gene or anti-oncogene. The protein is ETS homologous factor of Homo sapiens (Human).